The chain runs to 388 residues: MNLHEYQAKQLFARYGLPAPVGYACTTPREAEEAASKIGAGPWVVKCQVHAGGRGKAGGVKVVNSKEDIRAFAENWLGKRLVTYQTDANGQPVNQILVEAATDIGKELYLGAVVDRSSRRVVFMASTEGGVEIEKVAEETPHLIHKVALDPLTGPMPYQGRELAFKLGLEGKLVQQFTKIFMGLATIFLERDLALIEINPLVITKQGDLICLDGKLGADGNALFRQPDLREMRDQSQEDPREAQAAQWELNYVALDGNIGCMVNGAGLAMGTMDIVKLHGGEPANFLDVGGGATKERVTEAFKIILSDDNVKAVLVNIFGGIVRCDLIADGIIGAVEEVGVNVPVVVRLEGNNAELGAKKLADSGLNIIAAKSLTDAAQQVVAAVEGK.

The ATP-grasp domain maps to 9–244 (KQLFARYGLP…QSQEDPREAQ (236 aa)). ATP-binding positions include Lys-46, 53-55 (GRG), Glu-99, Thr-102, and Glu-107. The Mg(2+) site is built by Asn-199 and Asp-213. Substrate contacts are provided by residues Asn-264 and 321–323 (GIV).

The protein belongs to the succinate/malate CoA ligase beta subunit family. In terms of assembly, heterotetramer of two alpha and two beta subunits. It depends on Mg(2+) as a cofactor.

The enzyme catalyses succinate + ATP + CoA = succinyl-CoA + ADP + phosphate. It carries out the reaction GTP + succinate + CoA = succinyl-CoA + GDP + phosphate. It functions in the pathway carbohydrate metabolism; tricarboxylic acid cycle; succinate from succinyl-CoA (ligase route): step 1/1. In terms of biological role, succinyl-CoA synthetase functions in the citric acid cycle (TCA), coupling the hydrolysis of succinyl-CoA to the synthesis of either ATP or GTP and thus represents the only step of substrate-level phosphorylation in the TCA. The beta subunit provides nucleotide specificity of the enzyme and binds the substrate succinate, while the binding sites for coenzyme A and phosphate are found in the alpha subunit. This Salmonella arizonae (strain ATCC BAA-731 / CDC346-86 / RSK2980) protein is Succinate--CoA ligase [ADP-forming] subunit beta.